A 348-amino-acid chain; its full sequence is 4-hydroxy-2-oxovalerate aldolase 2 (348 aa).

Residues 5–256 form the Pyruvate carboxyltransferase domain; it reads LQICDSTLRD…EARIKLFDAL (252 aa). Residue 13–14 participates in substrate binding; the sequence is RD. Asp-14 is a Mn(2+) binding site. The active-site Proton acceptor is the His-17. 2 residues coordinate substrate: Ser-168 and His-195. Residues His-195 and His-197 each contribute to the Mn(2+) site.

Belongs to the 4-hydroxy-2-oxovalerate aldolase family.

It catalyses the reaction (S)-4-hydroxy-2-oxopentanoate = acetaldehyde + pyruvate. This chain is 4-hydroxy-2-oxovalerate aldolase 2, found in Salinispora arenicola (strain CNS-205).